Here is a 318-residue protein sequence, read N- to C-terminus: MKHAENEYLNLCRHVMEHGTKKEDRTGTGTVSVFGYQMRFDLSKGFPLLTTKRVPFRLVASELLWFMKGDTNIRYLLQHNNNIWNEWAFKSWVESDEYTGPDMTDFGLRSQQDEEFKVQYDEQMELFKKNVLEDDEFSNKYGYLGDVYGKQWRAWKTTAGETLDQLKDVIEMIKKTPDSRRLIVSAWNPEDVPSMALPPCHTLFQFYVADGKLSCQLYQRSGDIFLGIPFNIASYSLLTHLIAHECGLEVGEFVHTIGDAHIYTNHFEQVEKQLAREPRPFPKLTLNPDVKSVFDFEMEDLTIEGYDPHPAIKAPVAV.

Residues R25 and 180–181 each bind dUMP; that span reads RR. Catalysis depends on C200, which acts as the Nucleophile. DUMP is bound by residues 220-223, N231, and 261-263; these read RSGD and HIY. A (6R)-5,10-methylene-5,6,7,8-tetrahydrofolate-binding site is contributed by D223. A317 contributes to the (6R)-5,10-methylene-5,6,7,8-tetrahydrofolate binding site.

Belongs to the thymidylate synthase family. Bacterial-type ThyA subfamily. Homodimer.

Its subcellular location is the cytoplasm. The enzyme catalyses dUMP + (6R)-5,10-methylene-5,6,7,8-tetrahydrofolate = 7,8-dihydrofolate + dTMP. It functions in the pathway pyrimidine metabolism; dTTP biosynthesis. Its function is as follows. Catalyzes the reductive methylation of 2'-deoxyuridine-5'-monophosphate (dUMP) to 2'-deoxythymidine-5'-monophosphate (dTMP) while utilizing 5,10-methylenetetrahydrofolate (mTHF) as the methyl donor and reductant in the reaction, yielding dihydrofolate (DHF) as a by-product. This enzymatic reaction provides an intracellular de novo source of dTMP, an essential precursor for DNA biosynthesis. The sequence is that of Thymidylate synthase from Bacillus cereus (strain ATCC 14579 / DSM 31 / CCUG 7414 / JCM 2152 / NBRC 15305 / NCIMB 9373 / NCTC 2599 / NRRL B-3711).